Reading from the N-terminus, the 558-residue chain is Urocanate hydratase (558 aa).

Residues 54 to 55 (GG), glutamine 132, 178 to 180 (GMG), glutamate 198, 244 to 245 (NA), 265 to 269 (QTSAH), 275 to 276 (YL), and tyrosine 324 contribute to the NAD(+) site. The active site involves cysteine 412. Residue glycine 494 coordinates NAD(+).

It belongs to the urocanase family. Requires NAD(+) as cofactor.

The protein resides in the cytoplasm. It catalyses the reaction 4-imidazolone-5-propanoate = trans-urocanate + H2O. It participates in amino-acid degradation; L-histidine degradation into L-glutamate; N-formimidoyl-L-glutamate from L-histidine: step 2/3. Catalyzes the conversion of urocanate to 4-imidazolone-5-propionate. This chain is Urocanate hydratase, found in Acinetobacter baumannii (strain ACICU).